The chain runs to 236 residues: V-set and transmembrane domain-containing protein 2A (236 aa).

The signal sequence occupies residues 1-24; it reads MMGIFLVYVGFVFFSVLYVQQGLS. The Ig-like V-type domain occupies 27-143; the sequence is AKFTEFPRNV…YGELQEHKAQ (117 aa). Residue N35 is glycosylated (N-linked (GlcNAc...) asparagine). A disulfide bridge connects residues C48 and C127. A glycan (N-linked (GlcNAc...) asparagine) is linked at N175. The span at 184-199 shows a compositional bias: polar residues; the sequence is IHGSANQRTHSTSSPQ. Residues 184–206 are disordered; it reads IHGSANQRTHSTSSPQVVAKIPK.

As to quaternary structure, homodimer. Post-translationally, N-glycosylated. N-linked glycosylation is critical for secretion but not for preadipocyte cell differentiation activity.

It localises to the secreted. Functionally, plays a role in the regulation of the early stage of white and brown preadipocyte cell differentiation. Promotes adipogenic commitment of preadipocytes by increasing gene expression of the transcription factor PPARG in a BMP4-dependent signaling pathway. In Homo sapiens (Human), this protein is V-set and transmembrane domain-containing protein 2A.